The chain runs to 121 residues: uncharacterized protein (121 aa).

A CHCH domain is found at 43–86 (LKECSSHVAAFADCSKDKYISVVWECRELQQLMKNCLVEYTTSE). 2 short sequence motifs (cx9C motif) span residues 46–56 (CSSHVAAFADC) and 68–78 (CRELQQLMKNC). Intrachain disulfides connect Cys46-Cys78 and Cys56-Cys68.

The protein belongs to the CMC family.

This is an uncharacterized protein from Dictyostelium discoideum (Social amoeba).